Here is a 241-residue protein sequence, read N- to C-terminus: Sugar fermentation stimulation protein homolog (241 aa).

It belongs to the SfsA family.

In Trichormus variabilis (strain ATCC 29413 / PCC 7937) (Anabaena variabilis), this protein is Sugar fermentation stimulation protein homolog.